The chain runs to 578 residues: ER degradation-enhancing alpha-mannosidase-like protein 2 (578 aa).

A signal peptide spans 1 to 21 (MPFRLLIPLGLLCALLPQHHG). Residues N90, N112, N289, and N450 are each glycosylated (N-linked (GlcNAc...) asparagine). Positions 517–557 (KNTVSSGPWEPPARPGTLFSPENHDQARERKPAKQKVPLLS) are disordered. Basic and acidic residues predominate over residues 538-548 (ENHDQARERKP).

It belongs to the glycosyl hydrolase 47 family. N-glycosylated. As to expression, expressed ubiquitously in all tissues tested with slightly higher levels detected in small intestine and peripheral blood leukocytes and weakest levels in brain and skeletal muscle.

It localises to the endoplasmic reticulum lumen. Functionally, involved in the endoplasmic reticulum-associated degradation (ERAD) pathway that targets misfolded glycoproteins for degradation in an N-glycan-dependent manner. May initiate ERAD by promoting the first mannose trimming step of ERAD substrates, from Man9GlcNAc2 to Man8GlcNAc2. Seems to recognize and bind to exposed hydrophobic regions in target proteins. In Homo sapiens (Human), this protein is ER degradation-enhancing alpha-mannosidase-like protein 2 (EDEM2).